A 287-amino-acid polypeptide reads, in one-letter code: Cyclopropane mycolic acid synthase 1 (287 aa).

Residues 33–34, 68–76, 94–99, and 123–124 contribute to the S-adenosyl-L-methionine site; these read YS, LLDVGCGWG, TLSKNQ, and WE. Cysteine 269 is an active-site residue.

This sequence belongs to the CFA/CMAS family. As to quaternary structure, homodimer.

It localises to the cytoplasm. The catalysed reaction is a 1-acyl-2-(9Z)-enoyl-sn-glycero-3-phospholipid + S-adenosyl-L-methionine = a 1-acyl-2-(9-cyclopronane)-acyl-sn-glycero-3-phospholipid + S-adenosyl-L-homocysteine + H(+). It participates in lipid metabolism; mycolic acid biosynthesis. Its function is as follows. Catalyzes the conversion of a double bond to a cyclopropane ring at the distal position of an alpha mycolic acid via the transfer of a methylene group from S-adenosyl-L-methionine. Cyclopropanated mycolic acids are key factors participating in cell envelope permeability, host immunomodulation and persistence. The protein is Cyclopropane mycolic acid synthase 1 (cmaA1) of Mycobacterium tuberculosis (strain ATCC 25177 / H37Ra).